The sequence spans 724 residues: uncharacterized protein (724 aa).

This is an uncharacterized protein from Treponema pallidum (strain Nichols).